We begin with the raw amino-acid sequence, 576 residues long: Threonine dehydratase, mitochondrial (576 aa).

The residue at position 109 (Lys109) is an N6-(pyridoxal phosphate)lysine. 2 consecutive ACT-like domains span residues 393–473 and 495–566; these read VFML…DISD and RIIS…DETD.

The protein belongs to the serine/threonine dehydratase family. As to quaternary structure, homotetramer. Requires pyridoxal 5'-phosphate as cofactor.

The protein localises to the mitochondrion. The catalysed reaction is L-threonine = 2-oxobutanoate + NH4(+). The protein operates within amino-acid biosynthesis; L-isoleucine biosynthesis; 2-oxobutanoate from L-threonine: step 1/1. With respect to regulation, isoleucine allosterically inhibits while valine allosterically activates this enzyme. The polypeptide is Threonine dehydratase, mitochondrial (ILV1) (Saccharomyces cerevisiae (strain ATCC 204508 / S288c) (Baker's yeast)).